Consider the following 448-residue polypeptide: Signal recognition particle 54 kDa protein (448 aa).

GTP-binding positions include 107–114 (GIQGSGKT), 189–193 (DSAGR), and 247–250 (TKLD).

The protein belongs to the GTP-binding SRP family. SRP54 subfamily. Part of the signal recognition particle protein translocation system, which is composed of SRP and FtsY. Archaeal SRP consists of a 7S RNA molecule of 300 nucleotides and two protein subunits: SRP54 and SRP19.

The protein localises to the cytoplasm. It catalyses the reaction GTP + H2O = GDP + phosphate + H(+). Involved in targeting and insertion of nascent membrane proteins into the cytoplasmic membrane. Binds to the hydrophobic signal sequence of the ribosome-nascent chain (RNC) as it emerges from the ribosomes. The SRP-RNC complex is then targeted to the cytoplasmic membrane where it interacts with the SRP receptor FtsY. This is Signal recognition particle 54 kDa protein from Thermococcus kodakarensis (strain ATCC BAA-918 / JCM 12380 / KOD1) (Pyrococcus kodakaraensis (strain KOD1)).